We begin with the raw amino-acid sequence, 382 residues long: D-galactonate dehydratase (382 aa).

Asp-183 contributes to the Mg(2+) binding site. His-185 (proton donor) is an active-site residue. Mg(2+) contacts are provided by Glu-209 and Glu-235. The active-site Proton acceptor is His-285.

This sequence belongs to the mandelate racemase/muconate lactonizing enzyme family. GalD subfamily. Requires Mg(2+) as cofactor.

The catalysed reaction is D-galactonate = 2-dehydro-3-deoxy-D-galactonate + H2O. It functions in the pathway carbohydrate acid metabolism; D-galactonate degradation; D-glyceraldehyde 3-phosphate and pyruvate from D-galactonate: step 1/3. In terms of biological role, catalyzes the dehydration of D-galactonate to 2-keto-3-deoxy-D-galactonate. The protein is D-galactonate dehydratase of Escherichia fergusonii (strain ATCC 35469 / DSM 13698 / CCUG 18766 / IAM 14443 / JCM 21226 / LMG 7866 / NBRC 102419 / NCTC 12128 / CDC 0568-73).